Reading from the N-terminus, the 64-residue chain is Alpha-mammal toxin AnCra1 (64 aa).

The region spanning 2 to 64 (KDGYIVDDVN…VRTKGPGRCN (63 aa)) is the LCN-type CS-alpha/beta domain. 4 cysteine pairs are disulfide-bonded: Cys-12–Cys-63, Cys-16–Cys-36, Cys-22–Cys-46, and Cys-26–Cys-48.

Belongs to the long (4 C-C) scorpion toxin superfamily. Sodium channel inhibitor family. Alpha subfamily. In terms of tissue distribution, expressed by the venom gland.

The protein resides in the secreted. Functionally, alpha toxins bind voltage-independently at site-3 of sodium channels (Nav) and inhibit the inactivation of the activated channels, thereby blocking neuronal transmission. This toxin is active against mammals. The recombinant toxin selectively inhibits the fast inactivation of hNav1.7/SCN9A channel (EC(50)=136.7 nM). Is potent in inhibiting the fast inactivation of hNav1.7 and has little effect on the steady-state inactivation. In vivo, intravenous injection into mice induces muscle contraction, leading to severe paralysis and death. The polypeptide is Alpha-mammal toxin AnCra1 (Androctonus crassicauda (Arabian fat-tailed scorpion)).